A 447-amino-acid chain; its full sequence is Argininosuccinate synthase (447 aa).

Residues alanine 17 to serine 25 and alanine 43 each bind ATP. Tyrosine 99 is an L-citrulline binding site. ATP contacts are provided by glycine 129 and threonine 131. L-aspartate-binding residues include threonine 131, asparagine 135, and aspartate 136. Residue asparagine 135 participates in L-citrulline binding. Residue aspartate 136 coordinates ATP. Arginine 139 and serine 192 together coordinate L-citrulline. Position 194 (aspartate 194) interacts with ATP. L-citrulline contacts are provided by threonine 201, glutamate 203, and glutamate 280.

Belongs to the argininosuccinate synthase family. Type 2 subfamily. In terms of assembly, homotetramer.

The protein resides in the cytoplasm. The enzyme catalyses L-citrulline + L-aspartate + ATP = 2-(N(omega)-L-arginino)succinate + AMP + diphosphate + H(+). It participates in amino-acid biosynthesis; L-arginine biosynthesis; L-arginine from L-ornithine and carbamoyl phosphate: step 2/3. The chain is Argininosuccinate synthase (argG) from Escherichia coli O157:H7.